The following is a 313-amino-acid chain: Aspartate carbamoyltransferase catalytic subunit (313 aa).

Carbamoyl phosphate is bound by residues Arg-58 and Thr-59. Lys-86 serves as a coordination point for L-aspartate. Carbamoyl phosphate-binding residues include Arg-108, His-136, and Gln-139. Positions 169 and 223 each coordinate L-aspartate. Carbamoyl phosphate is bound by residues Gly-265 and Pro-266.

The protein belongs to the aspartate/ornithine carbamoyltransferase superfamily. ATCase family. In terms of assembly, heterododecamer (2C3:3R2) of six catalytic PyrB chains organized as two trimers (C3), and six regulatory PyrI chains organized as three dimers (R2).

The enzyme catalyses carbamoyl phosphate + L-aspartate = N-carbamoyl-L-aspartate + phosphate + H(+). Its pathway is pyrimidine metabolism; UMP biosynthesis via de novo pathway; (S)-dihydroorotate from bicarbonate: step 2/3. Functionally, catalyzes the condensation of carbamoyl phosphate and aspartate to form carbamoyl aspartate and inorganic phosphate, the committed step in the de novo pyrimidine nucleotide biosynthesis pathway. This Anaeromyxobacter dehalogenans (strain 2CP-1 / ATCC BAA-258) protein is Aspartate carbamoyltransferase catalytic subunit.